Reading from the N-terminus, the 188-residue chain is PRA1 family protein 3 (188 aa).

Met-1 bears the N-acetylmethionine mark. The Cytoplasmic portion of the chain corresponds to 1–35 (MEVQVAPLRSWEDFFPGSDRFGRPDFKDISKWNNR). 2 helical membrane passes run 36 to 56 (VVNNLLYYQTNYLMVAAAVVA) and 57 to 77 (IVGFLSPLNMLIGGTVVILVF). At 78-93 (LGFVWVSHNKDILRRM) the chain is on the cytoplasmic side. A run of 2 helical transmembrane segments spans residues 94-114 (KKQYPTTFVIVIMLSSYFLIS) and 115-135 (YLGDVMVFMFGITLPLLLMFI). At 136–188 (HASLRLRNIKNKLENKKEEIGLKKTPMGIILDALEQQEDNINKLASYIPKVKE) the chain is on the cytoplasmic side. A targeting to endoplasmic reticulum membrane region spans residues 136–188 (HASLRLRNIKNKLENKKEEIGLKKTPMGIILDALEQQEDNINKLASYIPKVKE).

This sequence belongs to the PRA1 family. As to quaternary structure, binds to prenylated RAB and Ras superfamily members.

The protein localises to the endoplasmic reticulum membrane. It is found in the cell membrane. Its subcellular location is the cytoplasm. The protein resides in the cytoskeleton. Regulates intracellular concentrations of taurine and glutamate. Negatively modulates SLC1A1/EAAC1 glutamate transport activity by decreasing its affinity for glutamate in a PKC activity-dependent manner. May be involved in membrane traffic. The polypeptide is PRA1 family protein 3 (ARL6IP5) (Gallus gallus (Chicken)).